A 323-amino-acid chain; its full sequence is Acetyl esterase (323 aa).

Positions 91–93 match the Involved in the stabilization of the negatively charged intermediate by the formation of the oxyanion hole motif; it reads HGG. Active-site residues include serine 165, aspartate 262, and histidine 292.

The protein belongs to the 'GDXG' lipolytic enzyme family. In terms of assembly, homodimer. Interacts with MalT and MelA.

It localises to the cytoplasm. Functionally, displays esterase activity towards short chain fatty esters (acyl chain length of up to 8 carbons). Able to hydrolyze triacetylglycerol (triacetin) and tributyrylglycerol (tributyrin), but not trioleylglycerol (triolein) or cholesterol oleate. Negatively regulates MalT activity by antagonizing maltotriose binding. Inhibits MelA galactosidase activity. In Salmonella dublin (strain CT_02021853), this protein is Acetyl esterase.